Consider the following 643-residue polypeptide: DNA gyrase subunit B (643 aa).

A Toprim domain is found at serine 428–proline 542. Positions 434, 507, and 509 each coordinate Mg(2+).

The protein belongs to the type II topoisomerase GyrB family. As to quaternary structure, heterotetramer, composed of two GyrA and two GyrB chains. In the heterotetramer, GyrA contains the active site tyrosine that forms a transient covalent intermediate with DNA, while GyrB binds cofactors and catalyzes ATP hydrolysis. Mg(2+) is required as a cofactor. The cofactor is Mn(2+). It depends on Ca(2+) as a cofactor.

It localises to the cytoplasm. The catalysed reaction is ATP-dependent breakage, passage and rejoining of double-stranded DNA.. In terms of biological role, a type II topoisomerase that negatively supercoils closed circular double-stranded (ds) DNA in an ATP-dependent manner to modulate DNA topology and maintain chromosomes in an underwound state. Negative supercoiling favors strand separation, and DNA replication, transcription, recombination and repair, all of which involve strand separation. Also able to catalyze the interconversion of other topological isomers of dsDNA rings, including catenanes and knotted rings. Type II topoisomerases break and join 2 DNA strands simultaneously in an ATP-dependent manner. In Staphylococcus epidermidis (strain ATCC 35984 / DSM 28319 / BCRC 17069 / CCUG 31568 / BM 3577 / RP62A), this protein is DNA gyrase subunit B.